Here is a 777-residue protein sequence, read N- to C-terminus: UPF0313 protein VP1980 (777 aa).

Residues 363–642 (AYDMIKTSVN…KALLRYHDPA (280 aa)) enclose the Radical SAM core domain. [4Fe-4S] cluster contacts are provided by cysteine 377, cysteine 381, and cysteine 384. Positions 675–777 (AQTPAQRRKS…PAGQRKPKRR (103 aa)) are disordered. Residues 680 to 698 (QRRKSGRHGANRFATKHTK) are compositionally biased toward basic residues. Residues 709-719 (KRAEGGSKDGK) show a composition bias toward basic and acidic residues. Over residues 736 to 747 (PASNGQRPSGNG) the composition is skewed to polar residues. The span at 755 to 769 (KPQGQGRPQGQGKPA) shows a compositional bias: low complexity.

The protein belongs to the UPF0313 family. Requires [4Fe-4S] cluster as cofactor.

In Vibrio parahaemolyticus serotype O3:K6 (strain RIMD 2210633), this protein is UPF0313 protein VP1980.